The following is a 122-amino-acid chain: Large ribosomal subunit protein uL14 (122 aa).

The protein belongs to the universal ribosomal protein uL14 family. In terms of assembly, part of the 50S ribosomal subunit. Forms a cluster with proteins L3 and L19. In the 70S ribosome, L14 and L19 interact and together make contacts with the 16S rRNA in bridges B5 and B8.

In terms of biological role, binds to 23S rRNA. Forms part of two intersubunit bridges in the 70S ribosome. The protein is Large ribosomal subunit protein uL14 of Beutenbergia cavernae (strain ATCC BAA-8 / DSM 12333 / CCUG 43141 / JCM 11478 / NBRC 16432 / NCIMB 13614 / HKI 0122).